A 406-amino-acid chain; its full sequence is Cysteine desulfurase IscS (406 aa).

Pyridoxal 5'-phosphate is bound by residues 75–76 (AT), N155, Q183, and 203–205 (SSH). At K206 the chain carries N6-(pyridoxal phosphate)lysine. Pyridoxal 5'-phosphate is bound at residue T243. C330 acts as the Cysteine persulfide intermediate in catalysis. C330 contributes to the [2Fe-2S] cluster binding site.

Belongs to the class-V pyridoxal-phosphate-dependent aminotransferase family. NifS/IscS subfamily. As to quaternary structure, homodimer. Forms a heterotetramer with IscU, interacts with other sulfur acceptors. Pyridoxal 5'-phosphate is required as a cofactor.

It localises to the cytoplasm. The catalysed reaction is (sulfur carrier)-H + L-cysteine = (sulfur carrier)-SH + L-alanine. It participates in cofactor biosynthesis; iron-sulfur cluster biosynthesis. Master enzyme that delivers sulfur to a number of partners involved in Fe-S cluster assembly, tRNA modification or cofactor biosynthesis. Catalyzes the removal of elemental sulfur atoms from cysteine to produce alanine. Functions as a sulfur delivery protein for Fe-S cluster synthesis onto IscU, an Fe-S scaffold assembly protein, as well as other S acceptor proteins. This Glaesserella parasuis serovar 5 (strain SH0165) (Haemophilus parasuis) protein is Cysteine desulfurase IscS.